The primary structure comprises 556 residues: Calcium-dependent protein kinase 5 (556 aa).

Positions Met-1–Pro-40 are disordered. Residue Gly-2 is the site of N-myristoyl glycine attachment. Residues Ser-8–Ser-25 show a composition bias toward basic and acidic residues. Over residues Lys-26–Ser-39 the composition is skewed to low complexity. The region spanning Tyr-97–Ile-355 is the Protein kinase domain. Residues Leu-103 to Thr-111 and Lys-126 each bind ATP. The Proton acceptor role is filled by Asp-221. Ser-261 carries the post-translational modification Phosphoserine. The interval Ala-361 to Ile-391 is autoinhibitory domain. 4 EF-hand domains span residues Glu-398–Thr-433, Leu-434–Leu-469, Glu-470–Ala-505, and Leu-509–Gly-539. Ca(2+) is bound by residues Asp-411, Asp-413, Ser-415, Glu-422, Asp-447, Asp-449, Ser-451, Thr-453, Glu-458, Asp-483, Asp-485, Ser-487, Glu-494, Asp-517, Asn-519, Asp-521, Lys-523, and Glu-528.

Belongs to the protein kinase superfamily. Ser/Thr protein kinase family. CDPK subfamily.

It localises to the membrane. It carries out the reaction L-seryl-[protein] + ATP = O-phospho-L-seryl-[protein] + ADP + H(+). The catalysed reaction is L-threonyl-[protein] + ATP = O-phospho-L-threonyl-[protein] + ADP + H(+). Activated by calcium. Autophosphorylation may play an important role in the regulation of the kinase activity. Functionally, may play a role in signal transduction pathways that involve calcium as a second messenger. The sequence is that of Calcium-dependent protein kinase 5 (CPK5) from Arabidopsis thaliana (Mouse-ear cress).